The primary structure comprises 319 residues: Acetyl-coenzyme A carboxylase carboxyl transferase subunit alpha (319 aa).

Residues aspartate 35–glutamate 296 enclose the CoA carboxyltransferase C-terminal domain.

The protein belongs to the AccA family. Acetyl-CoA carboxylase is a heterohexamer composed of biotin carboxyl carrier protein (AccB), biotin carboxylase (AccC) and two subunits each of ACCase subunit alpha (AccA) and ACCase subunit beta (AccD).

It is found in the cytoplasm. The catalysed reaction is N(6)-carboxybiotinyl-L-lysyl-[protein] + acetyl-CoA = N(6)-biotinyl-L-lysyl-[protein] + malonyl-CoA. It participates in lipid metabolism; malonyl-CoA biosynthesis; malonyl-CoA from acetyl-CoA: step 1/1. Functionally, component of the acetyl coenzyme A carboxylase (ACC) complex. First, biotin carboxylase catalyzes the carboxylation of biotin on its carrier protein (BCCP) and then the CO(2) group is transferred by the carboxyltransferase to acetyl-CoA to form malonyl-CoA. This Aliivibrio fischeri (strain MJ11) (Vibrio fischeri) protein is Acetyl-coenzyme A carboxylase carboxyl transferase subunit alpha.